The following is a 239-amino-acid chain: tRNA (guanine-N(1)-)-methyltransferase (239 aa).

Residues glycine 108 and 127–132 (LGDFVL) each bind S-adenosyl-L-methionine.

Belongs to the RNA methyltransferase TrmD family. As to quaternary structure, homodimer.

It localises to the cytoplasm. It catalyses the reaction guanosine(37) in tRNA + S-adenosyl-L-methionine = N(1)-methylguanosine(37) in tRNA + S-adenosyl-L-homocysteine + H(+). Specifically methylates guanosine-37 in various tRNAs. The sequence is that of tRNA (guanine-N(1)-)-methyltransferase from Streptococcus thermophilus (strain ATCC BAA-250 / LMG 18311).